The chain runs to 303 residues: UDP-3-O-acyl-N-acetylglucosamine deacetylase (303 aa).

Residues His-78, His-237, and Asp-241 each coordinate Zn(2+). His-264 serves as the catalytic Proton donor.

It belongs to the LpxC family. Requires Zn(2+) as cofactor.

It carries out the reaction a UDP-3-O-[(3R)-3-hydroxyacyl]-N-acetyl-alpha-D-glucosamine + H2O = a UDP-3-O-[(3R)-3-hydroxyacyl]-alpha-D-glucosamine + acetate. It functions in the pathway glycolipid biosynthesis; lipid IV(A) biosynthesis; lipid IV(A) from (3R)-3-hydroxytetradecanoyl-[acyl-carrier-protein] and UDP-N-acetyl-alpha-D-glucosamine: step 2/6. Catalyzes the hydrolysis of UDP-3-O-myristoyl-N-acetylglucosamine to form UDP-3-O-myristoylglucosamine and acetate, the committed step in lipid A biosynthesis. The protein is UDP-3-O-acyl-N-acetylglucosamine deacetylase of Pseudomonas syringae pv. tomato (strain ATCC BAA-871 / DC3000).